Reading from the N-terminus, the 353-residue chain is Fasciculation and elongation protein zeta-2 (353 aa).

Residues 19–49 are disordered; it reads SLLDQENCNASPEPGAEAGAEAGGGADGFPA. The segment covering 28-38 has biased composition (low complexity); the sequence is ASPEPGAEAGA. A phosphoserine mark is found at serine 135, serine 176, and serine 195. Residues 214–286 are a coiled coil; the sequence is KRLSVSELNE…AKKKKKLKNG (73 aa). The disordered stretch occupies residues 271–300; it reads KEHKETAKKKKKLKNGSSQNGKNERSHMPG.

Belongs to the zygin family. As to quaternary structure, homodimer; disulfide-linked. May form heterodimers with FEZ1. Interacts with synaptotagmin. In terms of tissue distribution, expressed in nonneural tissues, such as heart, lung, spleen, muscle, testis, placenta and melanocytes.

In terms of biological role, involved in axonal outgrowth and fasciculation. The protein is Fasciculation and elongation protein zeta-2 (FEZ2) of Homo sapiens (Human).